The primary structure comprises 736 residues: DNA topoisomerase 4 subunit A (736 aa).

The Topo IIA-type catalytic domain maps to Leu-32–Gln-496. Tyr-120 functions as the O-(5'-phospho-DNA)-tyrosine intermediate in the catalytic mechanism.

The protein belongs to the type II topoisomerase GyrA/ParC subunit family. ParC type 1 subfamily. In terms of assembly, heterotetramer composed of ParC and ParE.

It localises to the cell membrane. The catalysed reaction is ATP-dependent breakage, passage and rejoining of double-stranded DNA.. Its function is as follows. Topoisomerase IV is essential for chromosome segregation. It relaxes supercoiled DNA. Performs the decatenation events required during the replication of a circular DNA molecule. This is DNA topoisomerase 4 subunit A from Rickettsia bellii (strain RML369-C).